The chain runs to 734 residues: MGYTLQQILRSICSNTDWNYAVFWKLNHHSPMVLTLEDVYCVNHERGLMPESLHGGRHAHDPLGLAVAKMSYHVHSLGEGIVGQVAISGQHQWIFSEYLNDSHSTLQVHNGWESQISAGIKTILIVAVGSCGVVQLGSLCKVEEDPALVTHIRHLFLALTDPLADHASNLMQCDINSPSDRPKIPSKCLHEASPDFSGEFDKAMDMEGLNIVSQNTSNRSNDLPYNFTPTYFHMERTAQVIGGLEAVQPSMFGSNDCVTSGFSVGVVDTKHKNQVDISDMSKVIYDEETGGYRYSRELDPNFQHYSRNHVRNSGGTSALAMESDRLKAGSSYPQLDSTVLTALKTDKDYSRRNEVFQPSESQGSIFVKDTEHRQEEKSESSQLDALTASLCSFSGSELLEALGPAFSKTSTDYGELAKFESAAAIRRTNDMSHSHLTFESSSENLLDAVVASMSNGDGNVRREISSSRSTQSLLTTAEMAQAEPFGHNKQNIVSTVDSVISQPPLADGLIQQNPSNICGAFSSIGFSSTCLSSSSDQFPTSLEIPKKNKKRAKPGESSRPRPRDRQLIQDRIKELRELVPNGSKCSIDSLLECTIKHMLFLQSVSQHADKLTKSASSKMQHKDTGTLGISSTEQGSSWAVEIGGHLQVCSIMVENLDKEGVMLIEMLCEECSHFLEIANVIRSLELIILRGTTEKQGEKTWICFVVEGQNNKVMHRMDILWSLVQIFQPKATNR.

The disordered stretch occupies residues 537 to 566; that stretch reads QFPTSLEIPKKNKKRAKPGESSRPRPRDRQ. The short motif at 548 to 555 is the Nuclear localization signal element; it reads NKKRAKPG. The bHLH domain maps to 552 to 601; it reads AKPGESSRPRPRDRQLIQDRIKELRELVPNGSKCSIDSLLECTIKHMLFL. A compositionally biased stretch (basic and acidic residues) spans 553-566; that stretch reads KPGESSRPRPRDRQ.

Belongs to the bHLH protein family. LHW subfamily. As to quaternary structure, homodimer.

Its subcellular location is the nucleus. Transcription factor that may regulate root development. This chain is Transcription factor EMB1444, found in Arabidopsis thaliana (Mouse-ear cress).